We begin with the raw amino-acid sequence, 170 residues long: Lipoprotein signal peptidase (170 aa).

The next 3 membrane-spanning stretches (helical) occupy residues 12-32 (WYWI…WVLS), 67-87 (WQRW…SVWL), and 94-113 (MWRL…GNLI). Catalysis depends on residues aspartate 123 and aspartate 141. A helical membrane pass occupies residues 133-153 (HFPAFNIADSAICIGAGLIIL).

Belongs to the peptidase A8 family.

It is found in the cell inner membrane. It carries out the reaction Release of signal peptides from bacterial membrane prolipoproteins. Hydrolyzes -Xaa-Yaa-Zaa-|-(S,diacylglyceryl)Cys-, in which Xaa is hydrophobic (preferably Leu), and Yaa (Ala or Ser) and Zaa (Gly or Ala) have small, neutral side chains.. The protein operates within protein modification; lipoprotein biosynthesis (signal peptide cleavage). This protein specifically catalyzes the removal of signal peptides from prolipoproteins. The chain is Lipoprotein signal peptidase from Shewanella piezotolerans (strain WP3 / JCM 13877).